A 254-amino-acid chain; its full sequence is Triosephosphate isomerase (254 aa).

12 to 14 (NWK) contributes to the substrate binding site. The active-site Electrophile is the His99. The active-site Proton acceptor is the Glu169. Substrate is bound by residues Gly175, Ser214, and 235–236 (GG).

The protein belongs to the triosephosphate isomerase family. As to quaternary structure, homodimer.

It localises to the cytoplasm. It catalyses the reaction D-glyceraldehyde 3-phosphate = dihydroxyacetone phosphate. The protein operates within carbohydrate biosynthesis; gluconeogenesis. It participates in carbohydrate degradation; glycolysis; D-glyceraldehyde 3-phosphate from glycerone phosphate: step 1/1. Functionally, involved in the gluconeogenesis. Catalyzes stereospecifically the conversion of dihydroxyacetone phosphate (DHAP) to D-glyceraldehyde-3-phosphate (G3P). The chain is Triosephosphate isomerase from Xanthobacter autotrophicus (strain ATCC BAA-1158 / Py2).